The following is a 1257-amino-acid chain: Receptor tyrosine-protein kinase erbB-2 (1257 aa).

The N-terminal stretch at 1–22 is a signal peptide; that stretch reads MELAAWCRWGFLLALLPPGIAG. The Extracellular segment spans residues 23-654; the sequence is TQVCTGTDMK…PAEQRASPVT (632 aa). The cysteines at positions 26 and 53 are disulfide-linked. N-linked (GlcNAc...) asparagine glycans are attached at residues asparagine 68 and asparagine 188. Cystine bridges form between cysteine 163–cysteine 193, cysteine 196–cysteine 205, cysteine 200–cysteine 213, cysteine 221–cysteine 228, cysteine 225–cysteine 236, cysteine 237–cysteine 245, cysteine 241–cysteine 253, cysteine 256–cysteine 265, cysteine 269–cysteine 296, cysteine 300–cysteine 312, cysteine 316–cysteine 332, cysteine 335–cysteine 339, cysteine 343–cysteine 368, cysteine 476–cysteine 506, cysteine 513–cysteine 522, and cysteine 517–cysteine 530. A glycan (N-linked (GlcNAc...) asparagine) is linked at asparagine 260. Asparagine 532 carries an N-linked (GlcNAc...) asparagine glycan. 8 cysteine pairs are disulfide-bonded: cysteine 533–cysteine 542, cysteine 546–cysteine 562, cysteine 565–cysteine 578, cysteine 569–cysteine 586, cysteine 589–cysteine 598, cysteine 602–cysteine 625, cysteine 628–cysteine 636, and cysteine 632–cysteine 644. A glycan (N-linked (GlcNAc...) asparagine) is linked at asparagine 573. Asparagine 631 is a glycosylation site (N-linked (GlcNAc...) asparagine). The helical transmembrane segment at 655–677 threads the bilayer; the sequence is FIIATVVGVLLFLILVVVVGILI. The interval 678-691 is required for interaction with KPNB1 and EEA1; it reads KRRRQKIRKYTMRR. Residues 678–691 carry the Nuclear localization signal motif; sequence KRRRQKIRKYTMRR. The Cytoplasmic portion of the chain corresponds to 678–1257; it reads KRRRQKIRKY…PEYLGLDVPV (580 aa). The region spanning 722–989 is the Protein kinase domain; it reads LRKVKVLGSG…RMARDPQRFV (268 aa). ATP-binding positions include 728–736 and lysine 755; that span reads LGSGAFGTV. Aspartate 847 serves as the catalytic Proton acceptor. Tyrosine 879 carries the post-translational modification Phosphotyrosine. Positions 1029–1181 are disordered; the sequence is QQGFFSPDPT…PKTLSPGKNG (153 aa). Phosphoserine is present on residues serine 1056, serine 1080, serine 1085, and serine 1109. The residue at position 1114 (tyrosine 1114) is a Phosphotyrosine. Phosphotyrosine; by autocatalysis is present on tyrosine 1141. A compositionally biased stretch (pro residues) spans 1149 to 1163; the sequence is PQPPLTPEGPLPPVR. A Phosphothreonine modification is found at threonine 1168. The interaction with PIK3C2B stretch occupies residues 1197 to 1199; it reads EYL. Tyrosine 1198 carries the phosphotyrosine modification. A disordered region spans residues 1200–1257; sequence VPREGTASPPHPSPAFSPAFDNLYYWDQNSSEQGPPPSNFEGTPTAENPEYLGLDVPV. Tyrosine 1250 bears the Phosphotyrosine; by autocatalysis mark.

The protein belongs to the protein kinase superfamily. Tyr protein kinase family. EGF receptor subfamily. Homodimer. Heterodimer with EGFR, ERBB3 and ERBB4. Part of a complex with EGFR and either PIK3C2A or PIK3C2B. May interact with PIK3C2B when phosphorylated on Tyr-1198. Interacts with PRKCABP and PLXNB1. Interacts (when phosphorylated on Tyr-1250) with MEMO1. Interacts with MUC1. Interacts (when phosphorylated on Tyr-1141) with GRB7 (via SH2 domain). Interacts (when phosphorylated on Tyr-1250) with ERBIN Interacts with SRC, KPNB1, RANBP2, EEA1, CRM1, CLTC, PTK6, RPA194, MYOC and ACTB. Interacts with HSP90AA1 and HSP90AB1; the interaction suppresses ERBB2 kinase activity. Interacts with SORL1; this interaction regulates ERBB2 subcellular distribution by promoting its recycling after internalization from endosomes back to the plasma membrane, hence stimulates ERBB2-mediated signaling. Interacts with SH3BGRL. Interacts with ROR1. In terms of processing, autophosphorylated. Autophosphorylation occurs in trans, i.e. one subunit of the dimeric receptor phosphorylates tyrosine residues on the other subunit. Ligand-binding increases phosphorylation on tyrosine residues. Signaling via SEMA4C promotes phosphorylation at Tyr-1250. Dephosphorylated by PTPN12.

Its subcellular location is the cell membrane. It localises to the cell projection. It is found in the ruffle membrane. The protein resides in the early endosome. The protein localises to the cytoplasm. Its subcellular location is the perinuclear region. It localises to the nucleus. It carries out the reaction L-tyrosyl-[protein] + ATP = O-phospho-L-tyrosyl-[protein] + ADP + H(+). Protein tyrosine kinase that is part of several cell surface receptor complexes, but that apparently needs a coreceptor for ligand binding. Essential component of a neuregulin-receptor complex, although neuregulins do not interact with it alone. GP30 is a potential ligand for this receptor. Regulates outgrowth and stabilization of peripheral microtubules (MTs). Upon ERBB2 activation, the MEMO1-RHOA-DIAPH1 signaling pathway elicits the phosphorylation and thus the inhibition of GSK3B at cell membrane. This prevents the phosphorylation of APC and CLASP2, allowing its association with the cell membrane. In turn, membrane-bound APC allows the localization of MACF1 to the cell membrane, which is required for microtubule capture and stabilization. Interacts (preferentially with the tyrosine phosphorylated form) with CPNE3; this interaction occurs at the cell membrane and is increased in a growth factor heregulin-dependent manner. In terms of biological role, in the nucleus is involved in transcriptional regulation. Associates with the 5'-TCAAATTC-3' sequence in the PTGS2/COX-2 promoter and activates its transcription. Implicated in transcriptional activation of CDKN1A; the function involves STAT3 and SRC. Involved in the transcription of rRNA genes by RNA Pol I and enhances protein synthesis and cell growth. In Rattus norvegicus (Rat), this protein is Receptor tyrosine-protein kinase erbB-2 (Erbb2).